The sequence spans 189 residues: UPF0312 protein VIBHAR_05924 (189 aa).

The signal sequence occupies residues 1-22; it reads MKKSLFATGLAIAIALPFGANA.

Belongs to the UPF0312 family. Type 1 subfamily.

The protein resides in the periplasm. This Vibrio campbellii (strain ATCC BAA-1116) protein is UPF0312 protein VIBHAR_05924.